Consider the following 244-residue polypeptide: Lipid A 1-phosphatase (244 aa).

6 consecutive transmembrane segments (helical) span residues 28–48, 60–80, 98–118, 154–174, 178–198, and 201–221; these read LFVT…PIGA, ELLT…LLFF, ALYV…SGLL, FPSG…LLFP, VAFI…GAHY, and DVIA…IVFA.

It belongs to the lipid A LpxE 1-phosphatase family.

It is found in the cell inner membrane. It functions in the pathway bacterial outer membrane biogenesis; LPS lipid A biosynthesis. Removes the 1-phosphate group from (tetraacyl) lipid A species, has no requirement for the Kdo(2) moiety of lipid A. Has no 4'-phosphatase activity. Reduces sensitivity of S.meliloti strain 1021 to the cationic antimicrobial peptide (CAMP) polymyxin B. The sequence is that of Lipid A 1-phosphatase from Rhizobium johnstonii (strain DSM 114642 / LMG 32736 / 3841) (Rhizobium leguminosarum bv. viciae).